The following is a 354-amino-acid chain: Uroporphyrinogen decarboxylase (354 aa).

Residues 27–31 (RQAGR), D77, Y154, S209, and H327 contribute to the substrate site.

The protein belongs to the uroporphyrinogen decarboxylase family. In terms of assembly, homodimer.

The protein localises to the cytoplasm. It carries out the reaction uroporphyrinogen III + 4 H(+) = coproporphyrinogen III + 4 CO2. The protein operates within porphyrin-containing compound metabolism; protoporphyrin-IX biosynthesis; coproporphyrinogen-III from 5-aminolevulinate: step 4/4. Its function is as follows. Catalyzes the decarboxylation of four acetate groups of uroporphyrinogen-III to yield coproporphyrinogen-III. The protein is Uroporphyrinogen decarboxylase of Shewanella pealeana (strain ATCC 700345 / ANG-SQ1).